A 287-amino-acid chain; its full sequence is MGQKINPHGFRLGITTDWKSRWYADKQYKDYVKEDVAIRRLLATGLERAGIADVEIERTRDRVRVDIHTARPGIVIGRRGTEADRIRADLEKLTKKQVQLNILEVKNPESVAQLVAQGVAEQLSNRVAFRRAMRKAIQSAMRQPNVKGIRVQCSGRLGGAEMSRSEFYREGRVPLHTLRADIDYGLYEAKTTFGRIGVKVWIYKGDIVGGKRELTAAAPAGADRPRRERPSGSRPRRSGASGTTATSTDAGRAASGTQEAPAAAEAAAGTEAAAGAAAETTTQNPGS.

The KH type-2 domain maps to 38 to 106; that stretch reads IRRLLATGLE…QVQLNILEVK (69 aa). The segment at 216–287 is disordered; the sequence is AAAPAGADRP…AETTTQNPGS (72 aa). Positions 238 to 287 are enriched in low complexity; sequence SGASGTTATSTDAGRAASGTQEAPAAAEAAAGTEAAAGAAAETTTQNPGS.

It belongs to the universal ribosomal protein uS3 family. In terms of assembly, part of the 30S ribosomal subunit. Forms a tight complex with proteins S10 and S14.

Functionally, binds the lower part of the 30S subunit head. Binds mRNA in the 70S ribosome, positioning it for translation. The chain is Small ribosomal subunit protein uS3 from Mycobacterium sp. (strain JLS).